The following is a 372-amino-acid chain: L-selectin (372 aa).

Positions 1-28 (MVFPWRCQSAQRGSWSFLKLWIRTLLCC) are cleaved as a signal peptide. The propeptide occupies 29–38 (DLLPHHGTHC). The Extracellular portion of the chain corresponds to 39–332 (WTYHYSERSM…FSKIKEGDYN (294 aa)). Positions 55–155 (KFCKHNYTDL…ACHKRKAALC (101 aa)) constitute a C-type lectin domain. 10 disulfide bridges follow: Cys57–Cys155, Cys128–Cys147, Cys128–Cys160, Cys160–Cys171, Cys165–Cys180, Cys182–Cys191, Cys197–Cys241, Cys227–Cys254, Cys259–Cys303, and Cys289–Cys316. 2 N-linked (GlcNAc...) asparagine glycosylation sites follow: Asn60 and Asn104. Ca(2+) contacts are provided by Glu118, Asn120, Glu126, Asn143, and Asp144. Residues 156-192 (YTASCQPESCNRHGECVETINNNTCICDPGYYGPQCQ) enclose the EGF-like domain. An N-linked (GlcNAc...) asparagine glycan is attached at Asn177. Sushi domains follow at residues 195–256 (IQCE…ICQV) and 257–318 (IQCM…ICQK). Asn226, Asn246, and Asn278 each carry an N-linked (GlcNAc...) asparagine glycan. A helical transmembrane segment spans residues 333–355 (PLFIPVAVMVTAFSGLAFIIWLA). Topologically, residues 356–372 (RRLKKGKKSQERMDDPY) are cytoplasmic.

Belongs to the selectin/LECAM family. As to quaternary structure, interaction with SELPLG/PSGL1 and PODXL2 is required for promoting recruitment and rolling of leukocytes. This interaction is dependent on the sialyl Lewis X glycan modification of SELPLG and PODXL2, and tyrosine sulfation modifications of SELPLG. Sulfation on 'Tyr-51' of SELPLG is important for L-selectin binding. Post-translationally, N-glycosylated. In terms of tissue distribution, expressed in peripheral blood mononuclear cells (PBMC), spleen and thymus.

The protein localises to the cell membrane. Functionally, calcium-dependent lectin that mediates cell adhesion by binding to glycoproteins on neighboring cells. Mediates the adherence of lymphocytes to endothelial cells of high endothelial venules in peripheral lymph nodes. Promotes initial tethering and rolling of leukocytes in endothelia. The chain is L-selectin (Sell) from Rattus norvegicus (Rat).